Reading from the N-terminus, the 37-residue chain is Protein YhiY (37 aa).

The sequence is that of Protein YhiY from Escherichia coli (strain K12).